A 298-amino-acid polypeptide reads, in one-letter code: Protoheme IX farnesyltransferase (298 aa).

8 consecutive transmembrane segments (helical) span residues 16-36 (VVAL…PGMP), 45-65 (ALGF…NQLL), 97-117 (VLIV…TAVL), 141-161 (IVIG…AVTG), 172-192 (SLLV…LAIF), 223-243 (VLLA…VFYL), 244-264 (GGAV…LDPP), and 277-297 (VVYL…LPWV).

It belongs to the UbiA prenyltransferase family. Protoheme IX farnesyltransferase subfamily.

Its subcellular location is the cell inner membrane. It carries out the reaction heme b + (2E,6E)-farnesyl diphosphate + H2O = Fe(II)-heme o + diphosphate. Its pathway is porphyrin-containing compound metabolism; heme O biosynthesis; heme O from protoheme: step 1/1. In terms of biological role, converts heme B (protoheme IX) to heme O by substitution of the vinyl group on carbon 2 of heme B porphyrin ring with a hydroxyethyl farnesyl side group. The protein is Protoheme IX farnesyltransferase of Xanthomonas campestris pv. campestris (strain 8004).